The following is a 160-amino-acid chain: MADSDVKKVTKGEKKTREAMKKLGLAPVSDIFRVTIKQKEGVLVVVAEPEVYASPSGETYVVFGDHSFDDIASRLQKAVPKANVDDIVKAAMPAPTAVKESEESEEIVAQAVDSFDYKGVNPKDVEVVMKETKASREKVVETLIATKNDLVSAVLELTTN.

Positions 10–75 (TKGEKKTREA…HSFDDIASRL (66 aa)) constitute an NAC-A/B domain. The UBA domain maps to 120-159 (VNPKDVEVVMKETKASREKVVETLIATKNDLVSAVLELTT).

The protein belongs to the NAC-alpha family. As to quaternary structure, part of the nascent polypeptide-associated complex (NAC), consisting of nacA and nacB.

Its subcellular location is the cytoplasm. It localises to the nucleus. Its function is as follows. Component of the nascent polypeptide-associated complex (NAC), a dynamic component of the ribosomal exit tunnel, protecting the emerging polypeptides from interaction with other cytoplasmic proteins to ensure appropriate nascent protein targeting. The NAC complex also promotes mitochondrial protein import by enhancing productive ribosome interactions with the outer mitochondrial membrane and blocks the inappropriate interaction of ribosomes translating non-secretory nascent polypeptides with translocation sites in the membrane of the endoplasmic reticulum. May also be involved in transcription regulation. The sequence is that of Nascent polypeptide-associated complex subunit alpha (nacA) from Dictyostelium discoideum (Social amoeba).